Reading from the N-terminus, the 483-residue chain is Glutamate--tRNA ligase (483 aa).

The 'HIGH' region motif lies at 9–19 (PSPTGNLHIGT). Positions 250 to 254 (KLSKR) match the 'KMSKS' region motif. Lysine 253 serves as a coordination point for ATP.

This sequence belongs to the class-I aminoacyl-tRNA synthetase family. Glutamate--tRNA ligase type 1 subfamily. As to quaternary structure, monomer.

It localises to the cytoplasm. The catalysed reaction is tRNA(Glu) + L-glutamate + ATP = L-glutamyl-tRNA(Glu) + AMP + diphosphate. Its function is as follows. Catalyzes the attachment of glutamate to tRNA(Glu) in a two-step reaction: glutamate is first activated by ATP to form Glu-AMP and then transferred to the acceptor end of tRNA(Glu). The polypeptide is Glutamate--tRNA ligase (Synechocystis sp. (strain ATCC 27184 / PCC 6803 / Kazusa)).